The following is a 500-amino-acid chain: Cytochrome P450 monooxygenase astJ (500 aa).

Residue cysteine 440 coordinates heme.

This sequence belongs to the cytochrome P450 family. The cofactor is heme.

It functions in the pathway secondary metabolite biosynthesis; terpenoid biosynthesis. Its function is as follows. Cytochrome P450 monooxygenase; part of the gene cluster that mediates the biosynthesis of astellolides, drimane-type sesquiterpene esters that show antimicrobial, anti-inflammatory, and anti-tumor activities. The first step in astellolide biosynthesis is performed by the sesquiterpene cyclase astC that catalyzes the formation of drimanyl pyrophosphate from farnesyl pyrophosphate. Drimanyl pyrophosphate is then dephosphorylated by the sesquiterpene phosphatase astI to produce drimanyl monophosphate which is further dephosphorylated to drim-8-ene-11-ol by atsK. Drim-8-ene-11-ol is converted to confertifolin, probably by the cytochrome P450 monooxygenase astD and/or the dehydrogenase astE. The cytochrome P450 monooxygenases astB, astF and astJ then hydroxylate confertifolin at C6, C14, or C15 to form trihydroxy confertifolin. The nonribosomal peptide synthetase astA catalyzes ester bond formation between trihydroxy contifolin and benzoic acid (BA) or 4-hydroxy benzoic acid (4HBA), leading to the formation of dideacetyl astellolides A and B, respectively. Finally, the O-acetyltransferase astG converts dideacetyl astellolides A and B into deacetyl astellolides A and B. In Aspergillus oryzae (strain ATCC 42149 / RIB 40) (Yellow koji mold), this protein is Cytochrome P450 monooxygenase astJ.